A 273-amino-acid polypeptide reads, in one-letter code: Aliphatic sulfonates import ATP-binding protein SsuB 2 (273 aa).

Residues 17–241 (LLDLRITRKL…PRDRRDPTLA (225 aa)) form the ABC transporter domain. 50–57 (GPSGCGKS) contacts ATP.

It belongs to the ABC transporter superfamily. Aliphatic sulfonates importer (TC 3.A.1.17.2) family. As to quaternary structure, the complex is composed of two ATP-binding proteins (SsuB), two transmembrane proteins (SsuC) and a solute-binding protein (SsuA).

The protein localises to the cell inner membrane. The enzyme catalyses ATP + H2O + aliphatic sulfonate-[sulfonate-binding protein]Side 1 = ADP + phosphate + aliphatic sulfonateSide 2 + [sulfonate-binding protein]Side 1.. Its function is as follows. Part of the ABC transporter complex SsuABC involved in aliphatic sulfonates import. Responsible for energy coupling to the transport system. This Burkholderia lata (strain ATCC 17760 / DSM 23089 / LMG 22485 / NCIMB 9086 / R18194 / 383) protein is Aliphatic sulfonates import ATP-binding protein SsuB 2.